A 103-amino-acid polypeptide reads, in one-letter code: UPF0235 protein Dole_0289 (103 aa).

It belongs to the UPF0235 family.

The polypeptide is UPF0235 protein Dole_0289 (Desulfosudis oleivorans (strain DSM 6200 / JCM 39069 / Hxd3) (Desulfococcus oleovorans)).